The chain runs to 235 residues: Non-structural maintenance of chromosomes element 1 homolog (235 aa).

Residues 181-225 form an RING-type; atypical zinc finger; the sequence is IKNCTLCKCLVLWDIRCGSCNIQYHRGCIQTYLQRRDICPSCGNL. T185 is subject to Phosphothreonine.

It belongs to the NSE1 family. As to quaternary structure, component of the Smc5-Smc6 complex which consists at least of Smc5, Smc6, Nse1, Nse2, Nse4 and MAGE. Nse1, Nse4 and MAGE probably form a subcomplex that bridges the head domains of the Smc5-Smc6 heterodimer. Interacts with MAGE and Nse4.

The protein localises to the nucleus. The enzyme catalyses S-ubiquitinyl-[E2 ubiquitin-conjugating enzyme]-L-cysteine + [acceptor protein]-L-lysine = [E2 ubiquitin-conjugating enzyme]-L-cysteine + N(6)-ubiquitinyl-[acceptor protein]-L-lysine.. Its function is as follows. Component of the SMC5-SMC6 complex, a complex involved in repair of DNA double-strand breaks by homologous recombination. The complex may promote sister chromatid homologous recombination by recruiting the SMC1-SMC3 cohesin complex to double-strand breaks. The polypeptide is Non-structural maintenance of chromosomes element 1 homolog (Drosophila melanogaster (Fruit fly)).